A 698-amino-acid chain; its full sequence is SPX domain-containing membrane protein OsI_21475 (698 aa).

Residues 2–145 (VNFGKKLMAD…GYRFTDYYVT (144 aa)) form the SPX domain. The next 6 helical transmembrane spans lie at 248 to 268 (FMSLMLNLVNTFLYMVNTYII), 279 to 299 (LGAASTVCGVVIGSMAVAQIF), 316 to 336 (LIFSSIVLFLGNVCYAMAYDM), 339 to 357 (LTVLIIGRLLCGMGSARAV), 376 to 396 (AGFVSASALGMACGPALAGLL), and 412 to 432 (LPGWVMAVAWLLYLVWLWISF). A disordered region spans residues 467 to 495 (LLRDSSKKDEDDDEEVDDSEEGTHDSRKP). The segment covering 476–486 (EDDDEEVDDSE) has biased composition (acidic residues). Helical transmembrane passes span 514-534 (LLIYFMLKYAMEILLSESSVI), 545-565 (AVAIFLAILGLTVLPVNAVVG), 577-597 (LLMVSQITLLVGIIFSFKITS), 605-625 (VVSALVTFVSAEVLEGVNLSL), and 671-691 (LLNVTLLPSLVICAASIASTF).

It belongs to the major facilitator superfamily.

It localises to the membrane. In Oryza sativa subsp. indica (Rice), this protein is SPX domain-containing membrane protein OsI_21475.